The primary structure comprises 638 residues: Guanylate-binding protein 7 (638 aa).

Positions 1 to 310 (MASEIHMPGP…DAINSGATPC (310 aa)) are GTPase domain (Globular). The region spanning 35–277 (TQPVVVVAIV…FCSYIFTHAK (243 aa)) is the GB1/RHD3-type G domain. GTP is bound by residues 45-52 (GLYRTGKS), 67-69 (LGC), and 97-101 (DTEGL). Positions 311-638 (LENAMAVLAQ…LRNPGKKIIS (328 aa)) are interaction with the CYBA-CYBB complex. The segment at 590–638 (PSVFSQILDVAGSIFIAALPGAAKLVDLGMKILSSLCNRLRNPGKKIIS) is C-terminal tail; required for its localization to cytoplasmic vesicle.

Belongs to the TRAFAC class dynamin-like GTPase superfamily. GB1/RHD3 GTPase family. GB1 subfamily. Monomer and dimer. Interacts with CYBA, CYBA-CYBB complex and ATG4B. Interacts (via GB1/RHD3-type G domain) with NCF2 and NCF2-NCF4 complex.

The protein resides in the cytoplasmic vesicle membrane. The enzyme catalyses GTP + H2O = GDP + phosphate + H(+). It carries out the reaction GDP + H2O = GMP + phosphate + H(+). In terms of biological role, interferon (IFN)-inducible GTPase that plays important roles in innate immunity against a diverse range of bacterial, viral and protozoan pathogens. Hydrolyzes GTP to GMP in two consecutive cleavage reactions and predominantly uses GTP and not GDP or GMP as the substrate. Following infection, recruited to the pathogen-containing vacuoles or vacuole-escaped bacteria and acts as a positive regulator of inflammasome assembly by promoting the release of inflammasome ligands from bacteria. Acts by promoting lysis of pathogen-containing vacuoles, releasing pathogens into the cytosol. Following pathogen release in the cytosol, promotes recruitment of proteins that mediate bacterial cytolysis: this liberates ligands that are detected by inflammasomes, such as lipopolysaccharide (LPS) that activates the non-canonical CASP4/CASP11 inflammasome or double-stranded DNA (dsDNA) that activates the AIM2 inflammasome. Also promotes IFN-gamma-mediated host defense against bacterial infections by regulating oxidative responses and bacteriolytic peptide generation. May help to assemble NADPH oxidase on phagosomal membranes by acting as a bridging protein between NADPH oxidase cytosolic subunits NCF2-NCF4 and the membrane subunits CYBA-CYBB. Participates along with GBP1 in trafficking monoubiquinated protein cargo to autolysosomes for generating ubiquitin-derived antimicrobial peptides. Facilitates influenza A virus replication by inhibiting the activation of NF-kappaB and JAK-STAT signaling pathways and the expression of type I, type III interferons and pro-inflammatory cytokines. Confers protection to several pathogens, including the bacterial pathogens Listeria monocytogenes and Mycobacterium bovis BCG as well as the protozoan pathogen Toxoplasma gondii. Required for disruption of the parasitophorous vacuole formed following T.gondii infection and subsequent killing of the parasite. The protein is Guanylate-binding protein 7 (GBP7) of Homo sapiens (Human).